Reading from the N-terminus, the 96-residue chain is Redox-responsive transcriptional regulator WhiB3 (96 aa).

The 65-residue stretch at 22 to 86 folds into the 4Fe-4S Wbl-type domain; it reads LCRGVDSSMF…GGLSESEREL (65 aa). [4Fe-4S] cluster is bound by residues Cys23, Cys53, Cys56, and Cys62.

This sequence belongs to the WhiB family. [4Fe-4S] cluster is required as a cofactor. In terms of processing, the Fe-S cluster can be nitrosylated by nitric oxide (NO). Post-translationally, upon Fe-S cluster removal intramolecular disulfide bonds are formed.

It is found in the cytoplasm. Its function is as follows. A redox-sensitive transcriptional regulator. Maintains intracellular redox homeostasis by regulating catabolic metabolism and polyketide biosynthesis. Regulates expression of the redox buffer ergothioneine (ERG). In concert with myothiol (MSH), another redox buffer, responds to low pH leading to acid resistance. The apo- but not holo-form probably binds DNA. This Mycolicibacterium smegmatis (strain ATCC 700084 / mc(2)155) (Mycobacterium smegmatis) protein is Redox-responsive transcriptional regulator WhiB3 (whiB3).